Here is a 131-residue protein sequence, read N- to C-terminus: Small ribosomal subunit protein eS8 (131 aa).

The segment at 11 to 36 (DLKKPSGGKKGRVRKTKKKALCGGPP) is disordered. Basic residues predominate over residues 16–30 (SGGKKGRVRKTKKKA).

Belongs to the eukaryotic ribosomal protein eS8 family. As to quaternary structure, part of the 30S ribosomal subunit.

In Pyrobaculum islandicum (strain DSM 4184 / JCM 9189 / GEO3), this protein is Small ribosomal subunit protein eS8.